Reading from the N-terminus, the 273-residue chain is Dermonecrotic toxin LdSicTox-alphaIB3ai (273 aa).

Residue His-5 is part of the active site. Glu-25 and Asp-27 together coordinate Mg(2+). The active-site Nucleophile is His-41. Disulfide bonds link Cys-45-Cys-51 and Cys-47-Cys-190. Residue Asp-85 participates in Mg(2+) binding.

This sequence belongs to the arthropod phospholipase D family. Class II subfamily. It depends on Mg(2+) as a cofactor. In terms of tissue distribution, expressed by the venom gland.

It localises to the secreted. It carries out the reaction an N-(acyl)-sphingosylphosphocholine = an N-(acyl)-sphingosyl-1,3-cyclic phosphate + choline. It catalyses the reaction an N-(acyl)-sphingosylphosphoethanolamine = an N-(acyl)-sphingosyl-1,3-cyclic phosphate + ethanolamine. The enzyme catalyses a 1-acyl-sn-glycero-3-phosphocholine = a 1-acyl-sn-glycero-2,3-cyclic phosphate + choline. The catalysed reaction is a 1-acyl-sn-glycero-3-phosphoethanolamine = a 1-acyl-sn-glycero-2,3-cyclic phosphate + ethanolamine. Functionally, dermonecrotic toxins cleave the phosphodiester linkage between the phosphate and headgroup of certain phospholipids (sphingolipid and lysolipid substrates), forming an alcohol (often choline) and a cyclic phosphate. This toxin acts on sphingomyelin (SM). It may also act on ceramide phosphoethanolamine (CPE), lysophosphatidylcholine (LPC) and lysophosphatidylethanolamine (LPE), but not on lysophosphatidylserine (LPS), and lysophosphatidylglycerol (LPG). It acts by transphosphatidylation, releasing exclusively cyclic phosphate products as second products. Induces dermonecrosis, hemolysis, increased vascular permeability, edema, inflammatory response, and platelet aggregation. This is Dermonecrotic toxin LdSicTox-alphaIB3ai from Loxosceles deserta (Desert recluse spider).